We begin with the raw amino-acid sequence, 305 residues long: Protoheme IX farnesyltransferase (305 aa).

9 helical membrane passes run 38–58, 60–80, 110–130, 131–151, 161–181, 185–205, 227–247, 249–269, and 285–305; these read FITT…SFLG, LDIV…SCAI, AYAF…MTTV, TSAV…TMWS, IGSV…TGTI, AWVL…SLAI, VTKR…FFLG, LGWP…VIGL, and FVYS…ITLF.

The protein belongs to the UbiA prenyltransferase family. Protoheme IX farnesyltransferase subfamily. Interacts with CtaA.

It is found in the cell membrane. The enzyme catalyses heme b + (2E,6E)-farnesyl diphosphate + H2O = Fe(II)-heme o + diphosphate. It functions in the pathway porphyrin-containing compound metabolism; heme O biosynthesis; heme O from protoheme: step 1/1. Its function is as follows. Converts heme B (protoheme IX) to heme O by substitution of the vinyl group on carbon 2 of heme B porphyrin ring with a hydroxyethyl farnesyl side group. The polypeptide is Protoheme IX farnesyltransferase (Bacillus pumilus (strain SAFR-032)).